The primary structure comprises 181 residues: Large ribosomal subunit protein uL5c (181 aa).

It belongs to the universal ribosomal protein uL5 family. As to quaternary structure, part of the 50S ribosomal subunit; contacts the 5S rRNA.

It localises to the plastid. The protein resides in the chloroplast. Functionally, binds 5S rRNA, forms part of the central protuberance of the 50S subunit. The protein is Large ribosomal subunit protein uL5c (rpl5) of Porphyra purpurea (Red seaweed).